The primary structure comprises 906 residues: Protein translocase subunit SecA (906 aa).

ATP is bound by residues Gln-86, 104–108, and Asp-499; that span reads GEGKT. 4 residues coordinate Zn(2+): Cys-890, Cys-892, Cys-901, and His-902.

Belongs to the SecA family. In terms of assembly, monomer and homodimer. Part of the essential Sec protein translocation apparatus which comprises SecA, SecYEG and auxiliary proteins SecDF-YajC and YidC. The cofactor is Zn(2+).

The protein localises to the cell inner membrane. The protein resides in the cytoplasm. The enzyme catalyses ATP + H2O + cellular proteinSide 1 = ADP + phosphate + cellular proteinSide 2.. In terms of biological role, part of the Sec protein translocase complex. Interacts with the SecYEG preprotein conducting channel. Has a central role in coupling the hydrolysis of ATP to the transfer of proteins into and across the cell membrane, serving both as a receptor for the preprotein-SecB complex and as an ATP-driven molecular motor driving the stepwise translocation of polypeptide chains across the membrane. The protein is Protein translocase subunit SecA of Rickettsia prowazekii (strain Madrid E).